Here is a 708-residue protein sequence, read N- to C-terminus: Retrotransposon-derived protein PEG10 (708 aa).

A coiled-coil region spans residues Met1–Pro50. Residues Met21–Ile74 form a disordered region. Residues Glu26–Lys36 show a composition bias toward polar residues. Residues Leu37 to Val48 are compositionally biased toward basic and acidic residues. Residues Glu76 to Gly275 form a necessary for interaction with ACVRL1 region. A CCHC-type zinc finger spans residues Asn293–Ala310. The segment at Ala310–Ala344 is disordered. Glycyl lysine isopeptide (Lys-Gly) (interchain with G-Cter in ubiquitin) cross-links involve residues Lys311 and Lys314. Phosphoserine occurs at positions 316 and 321. Arg507, Arg598, and Arg611 each carry omega-N-methylarginine. The disordered stretch occupies residues Pro683 to Leu708.

Homooligomer; homooligomerizes into virion-like capsids. Interacts with ACVRL1. Interacts with SIAH1 and SIAH2. Undergoes proteolytic cleavage. Expressed in the cytotrophoblast layer but not in the overlying syncytiotrophoblast of the placenta. Expressed in prostate and breast carcinomas but not in normal breast and prostate epithelial cells. Expressed in the Hep-G2 cell line (at protein level). Expressed in brain, liver, spleen, kidney, thymus, lung, ovary, testis, reactive lymph node, skeletal muscle, adipose tissue and placenta. Expressed in pancreatic and hepatocellular carcinomas (HCC).

The protein resides in the extracellular vesicle membrane. It localises to the cytoplasm. Its subcellular location is the nucleus. In terms of biological role, retrotransposon-derived protein that binds its own mRNA and self-assembles into virion-like capsids. Forms virion-like extracellular vesicles that encapsulate their own mRNA and are released from cells, enabling intercellular transfer of PEG10 mRNA. Binds its own mRNA in the 5'-UTR region, in the region near the boundary between the nucleocapsid (NC) and protease (PRO) coding sequences and in the beginning of the 3'-UTR region. Involved in placenta formation: required for trophoblast stem cells differentiation. Involved at the immediate early stage of adipocyte differentiation. Overexpressed in many cancers and enhances tumor progression: promotes cell proliferation by driving cell cycle progression from G0/G1. Enhances cancer progression by inhibiting the TGF-beta signaling, possibly via interaction with the TGF-beta receptor ACVRL1. May bind to the 5'-GCCTGTCTTT-3' DNA sequence of the MB1 domain in the myelin basic protein (MBP) promoter; additional evidences are however required to confirm this result. This Homo sapiens (Human) protein is Retrotransposon-derived protein PEG10.